An 875-amino-acid chain; its full sequence is Kelch-like protein 29 (875 aa).

Positions W115 to W126 are enriched in polar residues. 2 disordered regions span residues W115–G145 and G248–H291. Positions P131–D140 are enriched in basic and acidic residues. Positions T329–S401 constitute a BTB domain. Kelch repeat units follow at residues V585–G635, N637–G683, K684–G730, I732–G778, F779–G821, and K822–K870.

The polypeptide is Kelch-like protein 29 (KLHL29) (Homo sapiens (Human)).